A 382-amino-acid polypeptide reads, in one-letter code: Gap junction alpha-1 protein (382 aa).

At 2-23 the chain is on the cytoplasmic side; it reads GGWSALAKLLGKVQAYSPAGGK. At serine 5 the chain carries Phosphoserine. Residues 24-44 traverse the membrane as a helical segment; that stretch reads VWLSVLFIFRILLLGTAVESA. Topologically, residues 45–76 are extracellular; the sequence is WGDEQSAFRCNTQQPGCENVCYDKSFPISHVR. 2 disulfides stabilise this stretch: cysteine 54–cysteine 192 and cysteine 187–cysteine 198. The helical transmembrane segment at 77 to 97 threads the bilayer; sequence FWVLQIIFVSVPTLLYLAHVF. Topologically, residues 98–155 are cytoplasmic; that stretch reads YVMRKEEKLNKKEEELKVAQTDGANVDMHLKQIEIKKFKYGIEEHGKVKMRGGLLRTY. Lysine 144 is covalently cross-linked (Glycyl lysine isopeptide (Lys-Gly) (interchain with G-Cter in SUMO)). A helical membrane pass occupies residues 156–176; it reads IISILFKSVFEVAFLLIQWYI. The Extracellular segment spans residues 177–207; the sequence is YGFSLSAVYTCKREPCPHQVDCFLSRPTEKT. Residues 208 to 228 traverse the membrane as a helical segment; that stretch reads IFIIFMLVVSLVSLALNIIEL. Residues 229 to 382 lie on the Cytoplasmic side of the membrane; sequence FYVFFKGVKD…SRPRPDDLEI (154 aa). Lysine 237 is covalently cross-linked (Glycyl lysine isopeptide (Lys-Gly) (interchain with G-Cter in SUMO)). The interval 244 to 382 is interaction with NOV; it reads SDPYHATTGP…SRPRPDDLEI (139 aa). Tyrosine 247 is modified (phosphotyrosine). Phosphoserine is present on residues serine 255, serine 257, and serine 262. Residues 264-382 form an interaction with UBQLN4 region; the sequence is EYAYFNGCSS…SRPRPDDLEI (119 aa). At cysteine 271 the chain carries S-nitrosocysteine. Threonine 275 carries the phosphothreonine modification. A phosphoserine mark is found at serine 306 and serine 314. Residues 317–332 are compositionally biased toward polar residues; that stretch reads QNRMGQAGSTISNSHA. The disordered stretch occupies residues 317-382; it reads QNRMGQAGST…SRPRPDDLEI (66 aa). The residue at position 325 (serine 325) is a Phosphoserine; by CK1. Residue threonine 326 is modified to Phosphothreonine. A phosphoserine; by CK1 mark is found at serine 328 and serine 330. Phosphoserine is present on residues serine 344 and serine 365. The segment covering 362–374 has biased composition (low complexity); it reads RPSSRASSRASSR. Residue serine 368 is modified to Phosphoserine; by PKC/PRKCG and PKC/PRKCD. Phosphoserine is present on residues serine 369 and serine 373.

The protein belongs to the connexin family. Alpha-type (group II) subfamily. A connexon is composed of a hexamer of connexins. Interacts with SGSM3. Interacts with RIC1/CIP150. Interacts with CNST and CSNK1D. Interacts (via C-terminus) with TJP1. Interacts (via C-terminus) with SRC (via SH3 domain). Interacts (not ubiquitinated) with UBQLN4 (via UBA domain). Interacts with NOV. Interacts with TMEM65. Interacts with ANK3/ANKG and PKP2. Post-translationally, phosphorylation at Ser-325, Ser-328 and Ser-330 by CK1 modulates gap junction assembly. Phosphorylated at Ser-368 by PRKCG; phosphorylation induces disassembly of gap junction plaques and inhibition of gap junction activity. Phosphorylation at Ser-368 by PRKCD triggers its internalization into small vesicles leading to proteasome-mediated degradation. Sumoylated with SUMO1, SUMO2 and SUMO3, which may regulate the level of functional Cx43 gap junctions at the plasma membrane. May be desumoylated by SENP1 or SENP2. In terms of processing, S-nitrosylation at Cys-271 is enriched at the muscle endothelial gap junction in arteries, it augments channel permeability and may regulate of smooth muscle cell to endothelial cell communication. Post-translationally, acetylated in the developing cortex; leading to delocalization from the cell membrane.

It localises to the cell membrane. Its subcellular location is the cell junction. The protein localises to the gap junction. The protein resides in the endoplasmic reticulum. Its function is as follows. Gap junction protein that acts as a regulator of bladder capacity. A gap junction consists of a cluster of closely packed pairs of transmembrane channels, the connexons, through which materials of low MW diffuse from one cell to a neighboring cell. May play a critical role in the physiology of hearing by participating in the recycling of potassium to the cochlear endolymph. Negative regulator of bladder functional capacity: acts by enhancing intercellular electrical and chemical transmission, thus sensitizing bladder muscles to cholinergic neural stimuli and causing them to contract. May play a role in cell growth inhibition through the regulation of NOV expression and localization. Plays an essential role in gap junction communication in the ventricles. The chain is Gap junction alpha-1 protein (GJA1) from Canis lupus familiaris (Dog).